The sequence spans 138 residues: Small ribosomal subunit protein uS12 (138 aa).

Residues 33–55 form a disordered region; the sequence is KEHTNVSSPQKRGVCTRVGTMTP. Asp102 bears the 3-methylthioaspartic acid mark.

Belongs to the universal ribosomal protein uS12 family. In terms of assembly, part of the 30S ribosomal subunit. Contacts proteins S8 and S17. May interact with IF1 in the 30S initiation complex.

Its function is as follows. With S4 and S5 plays an important role in translational accuracy. Interacts with and stabilizes bases of the 16S rRNA that are involved in tRNA selection in the A site and with the mRNA backbone. Located at the interface of the 30S and 50S subunits, it traverses the body of the 30S subunit contacting proteins on the other side and probably holding the rRNA structure together. The combined cluster of proteins S8, S12 and S17 appears to hold together the shoulder and platform of the 30S subunit. The sequence is that of Small ribosomal subunit protein uS12 from Bacillus velezensis (strain DSM 23117 / BGSC 10A6 / LMG 26770 / FZB42) (Bacillus amyloliquefaciens subsp. plantarum).